The primary structure comprises 2545 residues: uncharacterized protein (2545 aa).

Residues 17–37 (INFSITFIFINILLVFFSTFL) traverse the membrane as a helical segment. The stretch at 131-161 (LENIKQELHIIDRELKNILQKEENLQLINEE) forms a coiled coil. 3 disordered regions span residues 348 to 462 (NVNQ…PKKT), 587 to 616 (NHNMQRENTREDPSNNMDYTNKSTSDSNDI), and 1214 to 1238 (RNSSYNKKERDSKKDRDSVYDENRR). Composition is skewed to basic and acidic residues over residues 354-371 (SSDHKKESFKIDTKKNDQ), 380-391 (KNEKNEENEKNG), and 401-413 (QNGKNEQNGKNEQ). Residues 414–435 (NEQNDQIEQNYQNDPNDQNDQN) show a composition bias toward low complexity. 2 stretches are compositionally biased toward basic and acidic residues: residues 437-454 (QNEKNDQNEKNDQNKKNE) and 590-599 (MQRENTREDP). Residues 600 to 613 (SNNMDYTNKSTSDS) show a composition bias toward polar residues. Basic and acidic residues predominate over residues 1219 to 1238 (NKKERDSKKDRDSVYDENRR). The stretch at 2303–2337 (KEKYKFQMNMKDSEINQLQNNLIDEFKELNEVSKL) forms a coiled coil.

The protein resides in the membrane. This is an uncharacterized protein from Plasmodium falciparum (isolate 3D7).